The following is a 144-amino-acid chain: MKLNTIKPAEGAKHARRRVGRGIGSGLGKTGGRGHKGQKSRAGGFHKVGFEGGQMPLQRRLPKRGFNSLTKADTANVRTADLVRVEADVIDILALKQANVIPSGARAVKVYLSGDVTRAVTVQGLALSKGARAAVEAAGGKIVE.

Residues 1–54 form a disordered region; the sequence is MKLNTIKPAEGAKHARRRVGRGIGSGLGKTGGRGHKGQKSRAGGFHKVGFEGGQ. Over residues 21–31 the composition is skewed to gly residues; sequence RGIGSGLGKTG.

Belongs to the universal ribosomal protein uL15 family. As to quaternary structure, part of the 50S ribosomal subunit.

In terms of biological role, binds to the 23S rRNA. The sequence is that of Large ribosomal subunit protein uL15 from Methylobacillus flagellatus (strain ATCC 51484 / DSM 6875 / VKM B-1610 / KT).